A 300-amino-acid chain; its full sequence is Light-independent protochlorophyllide reductase iron-sulfur ATP-binding protein (300 aa).

ATP-binding positions include 43–48 and lysine 72; that span reads GIGKST. Residue serine 47 coordinates Mg(2+). Residues cysteine 128 and cysteine 162 each coordinate [4Fe-4S] cluster. Residue 213 to 214 participates in ATP binding; it reads NR.

The protein belongs to the NifH/BchL/ChlL family. In terms of assembly, homodimer. Protochlorophyllide reductase is composed of three subunits; ChlL, ChlN and ChlB. [4Fe-4S] cluster is required as a cofactor.

The enzyme catalyses chlorophyllide a + oxidized 2[4Fe-4S]-[ferredoxin] + 2 ADP + 2 phosphate = protochlorophyllide a + reduced 2[4Fe-4S]-[ferredoxin] + 2 ATP + 2 H2O. Its pathway is porphyrin-containing compound metabolism; chlorophyll biosynthesis (light-independent). In terms of biological role, component of the dark-operative protochlorophyllide reductase (DPOR) that uses Mg-ATP and reduced ferredoxin to reduce ring D of protochlorophyllide (Pchlide) to form chlorophyllide a (Chlide). This reaction is light-independent. The L component serves as a unique electron donor to the NB-component of the complex, and binds Mg-ATP. This Synechococcus sp. (strain RCC307) protein is Light-independent protochlorophyllide reductase iron-sulfur ATP-binding protein.